Consider the following 459-residue polypeptide: UDP-N-acetylmuramoylalanine--D-glutamate ligase (459 aa).

ATP is bound at residue 120 to 126 (GSNGKTT).

It belongs to the MurCDEF family.

Its subcellular location is the cytoplasm. The catalysed reaction is UDP-N-acetyl-alpha-D-muramoyl-L-alanine + D-glutamate + ATP = UDP-N-acetyl-alpha-D-muramoyl-L-alanyl-D-glutamate + ADP + phosphate + H(+). It participates in cell wall biogenesis; peptidoglycan biosynthesis. In terms of biological role, cell wall formation. Catalyzes the addition of glutamate to the nucleotide precursor UDP-N-acetylmuramoyl-L-alanine (UMA). The chain is UDP-N-acetylmuramoylalanine--D-glutamate ligase from Lactobacillus acidophilus (strain ATCC 700396 / NCK56 / N2 / NCFM).